Consider the following 196-residue polypeptide: Probable nicotinate-nucleotide adenylyltransferase (196 aa).

Belongs to the NadD family.

It catalyses the reaction nicotinate beta-D-ribonucleotide + ATP + H(+) = deamido-NAD(+) + diphosphate. It functions in the pathway cofactor biosynthesis; NAD(+) biosynthesis; deamido-NAD(+) from nicotinate D-ribonucleotide: step 1/1. Its function is as follows. Catalyzes the reversible adenylation of nicotinate mononucleotide (NaMN) to nicotinic acid adenine dinucleotide (NaAD). The chain is Probable nicotinate-nucleotide adenylyltransferase from Thermotoga petrophila (strain ATCC BAA-488 / DSM 13995 / JCM 10881 / RKU-1).